Consider the following 1071-residue polypeptide: SLIT-ROBO Rho GTPase-activating protein 2 (1071 aa).

Residues 22-325 (KEIRAQLTEQ…AVENLDATSD (304 aa)) enclose the F-BAR domain. Residues 181-203 (LKEAEKQEEKQIGKSVKQEDRQT) show a composition bias toward basic and acidic residues. The disordered stretch occupies residues 181-211 (LKEAEKQEEKQIGKSVKQEDRQTPRSPDSTA). Serine 206 is modified (phosphoserine). Residues 363–401 (QSELVQRCQQLQSRLSTLKIENEEVKKTMEATLQTIQDI) adopt a coiled-coil conformation. A phosphoserine mark is found at serine 427, serine 500, serine 691, and serine 695. The Rho-GAP domain maps to 489–679 (ARRSSTVRKQ…TIIIQHENIF (191 aa)). The interval 700-726 (CDSTHGETTSAEDSTQDVTAEHHTSDD) is disordered. A compositionally biased stretch (polar residues) spans 705-717 (GETTSAEDSTQDV). Position 724 is a phosphoserine (serine 724). The SH3 domain maps to 728 to 787 (CEPIEAIAKFDYVGRTARELSFKKGASLLLYQRASDDWWEGRHNGIDGLIPHQYIVVQDT). Serine 795 is subject to Phosphoserine. Disordered regions lie at residues 795-819 (SSPK…TGAS) and 838-918 (RKRP…DSPQ). Low complexity predominate over residues 855–868 (HGLGSSLTDSSSLG). 2 stretches are compositionally biased toward polar residues: residues 874-885 (RPSSQPIMSQNL) and 897-907 (GHGSLNSISRH). The residue at position 916 (serine 916) is a Phosphoserine. Arginine 927 is subject to Symmetric dimethylarginine; by PRMT5. Phosphoserine is present on serine 930. Residues 940-968 (EVIAQDIEATMNSALNELQELERQSSAKH) adopt a coiled-coil conformation. Positions 984–1012 (PVVAPTSEPSSPLHTQLLKDPEPAFQRSA) are disordered. 4 positions are modified to phosphoserine: serine 990, serine 994, serine 1013, and serine 1027. Positions 1029 to 1071 (KMAAPVKPPATRPKPTVFPKTNATSPGVNSSASPQATDKSCTV) are disordered. Polar residues predominate over residues 1047–1071 (PKTNATSPGVNSSASPQATDKSCTV).

Homodimer. Forms a heterooligomer with SRGAP1 and SRGAP3 through its F-BAR domain. Interacts (via SH3 domain) with GPHN. Interacts (via SH3 domain) with FMNL1 (activated by RAC1); regulates the actin filament severing activity of FMNL1 and actin dynamics. Interacts (via SH3 domain) with FMNL3. Interacts with RAC1; specifically stimulates RAC1 GTPase activity. Interacts (via F-BAR domain) with HOMER1. Interacts with ROBO1 and ROBO2. Interacts with FASLG. Interacts with PRMT5. Methylation at Arg-927 is required for the stimulation of cell migration, dimerization and localization at the plasma membrane protrusions.

It localises to the cell membrane. The protein localises to the cell projection. The protein resides in the dendritic spine. Its subcellular location is the postsynaptic density. It is found in the postsynaptic cell membrane. It localises to the lamellipodium. The protein localises to the cytoplasmic vesicle. The protein resides in the phagosome. Its subcellular location is the nucleus. It is found in the cytoplasm. It localises to the cytosol. Functionally, postsynaptic RAC1 GTPase activating protein (GAP) that plays a key role in neuronal morphogenesis and migration mainly during development of the cerebral cortex. Regulates excitatory and inhibitory synapse maturation and density in cortical pyramidal neurons. SRGAP2/SRGAP2A limits excitatory and inhibitory synapse density through its RAC1-specific GTPase activating activity, while it promotes maturation of both excitatory and inhibitory synapses through its ability to bind to the postsynaptic scaffolding protein HOMER1 at excitatory synapses, and the postsynaptic protein GPHN at inhibitory synapses. Mechanistically, acts by binding and deforming membranes, thereby regulating actin dynamics to regulate cell migration and differentiation. Promotes cell repulsion and contact inhibition of locomotion: localizes to protrusions with curved edges and controls the duration of RAC1 activity in contact protrusions. In non-neuronal cells, may also play a role in cell migration by regulating the formation of lamellipodia and filopodia. This is SLIT-ROBO Rho GTPase-activating protein 2 from Mus musculus (Mouse).